A 71-amino-acid chain; its full sequence is Large ribosomal subunit protein bL31 (71 aa).

Positions 16, 18, 36, and 39 each coordinate Zn(2+).

It belongs to the bacterial ribosomal protein bL31 family. Type A subfamily. Part of the 50S ribosomal subunit. It depends on Zn(2+) as a cofactor.

In terms of biological role, binds the 23S rRNA. The sequence is that of Large ribosomal subunit protein bL31 from Syntrophus aciditrophicus (strain SB).